Consider the following 79-residue polypeptide: uncharacterized protein (79 aa).

This is an uncharacterized protein from Escherichia coli (strain K12).